Consider the following 347-residue polypeptide: D-alanine--D-alanine ligase (347 aa).

In terms of domain architecture, ATP-grasp spans 134-332 (KLYAKDLGVK…LAQSLPKTPK (199 aa)). 161–216 (LIGFNFPFIVKPSNAGSSLGVNVVKEEKELIYALDSAFEYSKEVLIEPFIQGVKEY) contacts ATP. Positions 288, 300, and 302 each coordinate Mg(2+).

This sequence belongs to the D-alanine--D-alanine ligase family. Mg(2+) serves as cofactor. The cofactor is Mn(2+).

The protein localises to the cytoplasm. The enzyme catalyses 2 D-alanine + ATP = D-alanyl-D-alanine + ADP + phosphate + H(+). Its pathway is cell wall biogenesis; peptidoglycan biosynthesis. In terms of biological role, cell wall formation. The sequence is that of D-alanine--D-alanine ligase from Helicobacter pylori (strain J99 / ATCC 700824) (Campylobacter pylori J99).